Consider the following 402-residue polypeptide: UPF0261 protein BP1203 (402 aa).

Belongs to the UPF0261 family.

In Bordetella pertussis (strain Tohama I / ATCC BAA-589 / NCTC 13251), this protein is UPF0261 protein BP1203.